Consider the following 196-residue polypeptide: Corticoliberin (196 aa).

Residues 1–24 form the signal peptide; the sequence is MRLPLLVSAGVLLVALLPCPPCRA. A propeptide spanning residues 25–153 is cleaved from the precursor; the sequence is LLSRGPVPGA…HQEAPERERR (129 aa). 3 disordered regions span residues 32-61, 85-105, and 136-158; these read PGARQAPQHPQPLDFFQPPPQSEQPQQPQA, APLSPASSLLAGGSGSRPSPE, and GARNALGGHQEAPERERRSEEPP. Low complexity-rich tracts occupy residues 38–47 and 85–104; these read PQHPQPLDFF and APLSPASSLLAGGSGSRPSP. Positions 146-156 are enriched in basic and acidic residues; sequence EAPERERRSEE. At Ile-194 the chain carries Isoleucine amide.

This sequence belongs to the sauvagine/corticotropin-releasing factor/urotensin I family. In terms of assembly, interacts (via C-terminus) with CRFR1 (via N-terminal extracellular domain). Produced by the hypothalamus and placenta.

It is found in the secreted. Hormone regulating the release of corticotropin from pituitary gland. Induces NLRP6 in intestinal epithelial cells, hence may influence gut microbiota profile. The polypeptide is Corticoliberin (CRH) (Homo sapiens (Human)).